The sequence spans 577 residues: Arginine--tRNA ligase (577 aa).

The short motif at proline 122–histidine 132 is the 'HIGH' region element.

It belongs to the class-I aminoacyl-tRNA synthetase family. In terms of assembly, monomer.

Its subcellular location is the cytoplasm. It carries out the reaction tRNA(Arg) + L-arginine + ATP = L-arginyl-tRNA(Arg) + AMP + diphosphate. The sequence is that of Arginine--tRNA ligase from Citrobacter koseri (strain ATCC BAA-895 / CDC 4225-83 / SGSC4696).